Consider the following 396-residue polypeptide: Elongation factor Tu (396 aa).

The tr-type G domain maps to 10–206 (KPHVNVGTIG…ALDTYIPTPE (197 aa)). The tract at residues 19 to 26 (GHVDHGKT) is G1. 19–26 (GHVDHGKT) is a binding site for GTP. T26 provides a ligand contact to Mg(2+). A G2 region spans residues 60–64 (GITIN). The tract at residues 81–84 (DCPG) is G3. GTP is bound by residues 81 to 85 (DCPGH) and 136 to 139 (NKCD). Positions 136–139 (NKCD) are G4. The G5 stretch occupies residues 174 to 176 (SAK).

This sequence belongs to the TRAFAC class translation factor GTPase superfamily. Classic translation factor GTPase family. EF-Tu/EF-1A subfamily. Monomer.

The protein resides in the cytoplasm. The enzyme catalyses GTP + H2O = GDP + phosphate + H(+). In terms of biological role, GTP hydrolase that promotes the GTP-dependent binding of aminoacyl-tRNA to the A-site of ribosomes during protein biosynthesis. The polypeptide is Elongation factor Tu (Cupriavidus pinatubonensis (strain JMP 134 / LMG 1197) (Cupriavidus necator (strain JMP 134))).